Reading from the N-terminus, the 72-residue chain is Small proline-rich protein 2A (72 aa).

Positions 1-11 (MSYQQQQCKQP) are enriched in low complexity. The disordered stretch occupies residues 1-20 (MSYQQQQCKQPCQPPPVCPT). 3 tandem repeats follow at residues 21–29 (PKCPEPCPP), 30–38 (PKCPEPCPP), and 39–47 (PKCPQPCPP). Residues 21-47 (PKCPEPCPPPKCPEPCPPPKCPQPCPP) are 3 X 9 AA tandem repeats of P-K-C-P-[EQ]-P-C-P-P. Residues 42–72 (PQPCPPQQCQQKYPPVTPSPPCQSKYPPKSK) are disordered.

It belongs to the cornifin (SPRR) family. Post-translationally, forms five pairs of intrachain disulfide bonds. As to expression, expressed in intestine; selectively expressed in goblet cells.

The protein localises to the secreted. Its subcellular location is the extracellular space. It localises to the cytoplasmic vesicle. The protein resides in the secretory vesicle. In terms of biological role, gut bactericidal protein that selectively kills Gram-positive bacteria by binding to negatively charged lipids on bacterial membranes, leading to bacterial membrane permeabilization and disruption. Specifically binds lipids bearing negatively charged headgroups, such as phosphatidic acid, phosphatidylserine (PS), cardiolipin (CL), and phosphatidylinositol phosphates, but not to zwitterionic or neutral lipids. Induced by type-2 cytokines in response to helminth infection and is required to protect against helminth-induced bacterial invasion of intestinal tissue. May also be involved in the development of the cornified envelope of squamous epithelia; however, additional evidences are required to confirm this result in vivo. The sequence is that of Small proline-rich protein 2A from Homo sapiens (Human).